Consider the following 707-residue polypeptide: NAD(P)H-quinone oxidoreductase subunit 5, chloroplastic (707 aa).

Helical transmembrane passes span 9–29, 40–60, 89–109, 125–145, 147–167, 184–204, 219–239, 258–278, 280–300, 327–347, 354–374, 396–416, 425–445, 538–558, and 592–612; these read WIIP…LLLF, WAFP…DLSI, IDSL…FVLI, FAYM…SNLI, IYIF…FWFT, IGDF…GSFE, NEVH…GAVA, TPIS…FLVA, LLPL…IGII, LGYM…FHLI, ALLF…VGYS, IAFL…CFWS, WLYS…TAFY, LFPM…AIPL, and FLTN…TAFL.

The protein belongs to the complex I subunit 5 family. As to quaternary structure, NDH is composed of at least 16 different subunits, 5 of which are encoded in the nucleus.

It localises to the plastid. The protein localises to the chloroplast thylakoid membrane. It catalyses the reaction a plastoquinone + NADH + (n+1) H(+)(in) = a plastoquinol + NAD(+) + n H(+)(out). The catalysed reaction is a plastoquinone + NADPH + (n+1) H(+)(in) = a plastoquinol + NADP(+) + n H(+)(out). Functionally, NDH shuttles electrons from NAD(P)H:plastoquinone, via FMN and iron-sulfur (Fe-S) centers, to quinones in the photosynthetic chain and possibly in a chloroplast respiratory chain. The immediate electron acceptor for the enzyme in this species is believed to be plastoquinone. Couples the redox reaction to proton translocation, and thus conserves the redox energy in a proton gradient. This is NAD(P)H-quinone oxidoreductase subunit 5, chloroplastic (ndhF) from Malvaviscus arboreus (Turk's cap).